The chain runs to 470 residues: Sulfate adenylyltransferase subunit 1 (470 aa).

One can recognise a tr-type G domain in the interval 22–238; the sequence is KELLRFITCG…ETIKIDYAYT (217 aa). Residues 31–38 form a G1 region; sequence GSVDDGKS. 31–38 is a binding site for GTP; that stretch reads GSVDDGKS. Residues 89-93 are G2; that stretch reads GITID. The segment at 110-113 is G3; the sequence is DTPG. Residues 110-114 and 165-168 each bind GTP; these read DTPGH and NKMD. Residues 165 to 168 form a G4 region; that stretch reads NKMD. Residues 202-204 form a G5 region; it reads SAL.

This sequence belongs to the TRAFAC class translation factor GTPase superfamily. Classic translation factor GTPase family. CysN/NodQ subfamily. As to quaternary structure, heterodimer composed of CysD, the smaller subunit, and CysN.

The catalysed reaction is sulfate + ATP + H(+) = adenosine 5'-phosphosulfate + diphosphate. It participates in sulfur metabolism; hydrogen sulfide biosynthesis; sulfite from sulfate: step 1/3. Its function is as follows. With CysD forms the ATP sulfurylase (ATPS) that catalyzes the adenylation of sulfate producing adenosine 5'-phosphosulfate (APS) and diphosphate, the first enzymatic step in sulfur assimilation pathway. APS synthesis involves the formation of a high-energy phosphoric-sulfuric acid anhydride bond driven by GTP hydrolysis by CysN coupled to ATP hydrolysis by CysD. The polypeptide is Sulfate adenylyltransferase subunit 1 (Francisella tularensis subsp. tularensis (strain WY96-3418)).